A 190-amino-acid polypeptide reads, in one-letter code: dITP/XTP pyrophosphatase (190 aa).

7 to 12 (THNPNK) lines the substrate pocket. Residues E39 and D68 each coordinate Mg(2+). D68 serves as the catalytic Proton acceptor. Substrate is bound by residues T69, 148–151 (FGYD), K171, and 176–177 (HR).

The protein belongs to the HAM1 NTPase family. In terms of assembly, homodimer. Mg(2+) is required as a cofactor.

It catalyses the reaction XTP + H2O = XMP + diphosphate + H(+). The enzyme catalyses dITP + H2O = dIMP + diphosphate + H(+). It carries out the reaction ITP + H2O = IMP + diphosphate + H(+). Functionally, pyrophosphatase that catalyzes the hydrolysis of nucleoside triphosphates to their monophosphate derivatives, with a high preference for the non-canonical purine nucleotides XTP (xanthosine triphosphate), dITP (deoxyinosine triphosphate) and ITP. Seems to function as a house-cleaning enzyme that removes non-canonical purine nucleotides from the nucleotide pool, thus preventing their incorporation into DNA/RNA and avoiding chromosomal lesions. The protein is dITP/XTP pyrophosphatase of Christiangramia forsetii (strain DSM 17595 / CGMCC 1.15422 / KT0803) (Gramella forsetii).